A 588-amino-acid chain; its full sequence is Arginine--tRNA ligase (588 aa).

The short motif at 129 to 139 (PNIAKEMHVGH) is the 'HIGH' region element.

It belongs to the class-I aminoacyl-tRNA synthetase family. In terms of assembly, monomer.

The protein resides in the cytoplasm. The catalysed reaction is tRNA(Arg) + L-arginine + ATP = L-arginyl-tRNA(Arg) + AMP + diphosphate. The polypeptide is Arginine--tRNA ligase (Frankia casuarinae (strain DSM 45818 / CECT 9043 / HFP020203 / CcI3)).